The following is a 48-amino-acid chain: uncharacterized protein (48 aa).

This is an uncharacterized protein from Escherichia coli (Bacteriophage HK022).